The primary structure comprises 677 residues: Probable serine/threonine-protein kinase mkcF (677 aa).

The SH3 domain occupies 1–58 (MLYLVATGDYKGPSENHLSFTKGQRIEFLERTENGFIKGKLDGKVGIFPSSLITIETR). The tract at residues 72 to 244 (TETKDDTGSI…SSSSSSTKRR (173 aa)) is disordered. The segment covering 79-94 (GSISSSTSTSTSSLTT) has biased composition (low complexity). Residues 105–126 (GEQQPSTSTINGQSSSTSPILQ) are compositionally biased toward polar residues. The span at 127 to 146 (SNGTTNTTTSSTSNNNIGDN) shows a compositional bias: low complexity. Over residues 158–174 (TTSNHSKSASRLSVASF) the composition is skewed to polar residues. Residues 175-192 (STTTTATTTTTTTTTATS) show a composition bias toward low complexity. Basic and acidic residues predominate over residues 209–224 (DKKSKDDDKSEKEGLY). Over residues 230-240 (SSSSSSSSSSS) the composition is skewed to low complexity. The Protein kinase domain occupies 401–646 (IKFTHMVGRG…VDKLMRHPFF (246 aa)). Residues 407-415 (VGRGQYGKV) and Lys-428 each bind ATP. The active-site Proton acceptor is Asp-519.

This sequence belongs to the protein kinase superfamily. Ser/Thr protein kinase family. STE20 subfamily. Mg(2+) is required as a cofactor.

The catalysed reaction is L-seryl-[protein] + ATP = O-phospho-L-seryl-[protein] + ADP + H(+). The enzyme catalyses L-threonyl-[protein] + ATP = O-phospho-L-threonyl-[protein] + ADP + H(+). This chain is Probable serine/threonine-protein kinase mkcF, found in Dictyostelium discoideum (Social amoeba).